A 123-amino-acid chain; its full sequence is MPTIQQLVRKGRHDKTAKVATAALKGSPQRRGVCTRVYTTTPKKPNSALRKVARVRLTSGIEVSAYIPGEGHNLQEHSMVLVRGGRVKDLPGVRYKIIRGALDTQGVKDRKQARSRYGAKKEK.

It belongs to the universal ribosomal protein uS12 family. As to quaternary structure, part of the 30S ribosomal subunit. Contacts proteins S8 and S17. May interact with IF1 in the 30S initiation complex.

With S4 and S5 plays an important role in translational accuracy. Functionally, interacts with and stabilizes bases of the 16S rRNA that are involved in tRNA selection in the A site and with the mRNA backbone. Located at the interface of the 30S and 50S subunits, it traverses the body of the 30S subunit contacting proteins on the other side and probably holding the rRNA structure together. The combined cluster of proteins S8, S12 and S17 appears to hold together the shoulder and platform of the 30S subunit. This Corynebacterium diphtheriae (strain ATCC 700971 / NCTC 13129 / Biotype gravis) protein is Small ribosomal subunit protein uS12.